Consider the following 261-residue polypeptide: Histone H1-I (261 aa).

The span at 1–22 shows a compositional bias: low complexity; that stretch reads MSETEAAPVVAPAAEAAPAAEA. Disordered stretches follow at residues 1–63 and 125–261; these read MSET…PPYI and FKLS…KGKK. Basic and acidic residues predominate over residues 41–50; that stretch reads APKEPKAPKE. The H15 domain maps to 58–129; sequence THPPYIEMVK…KVKGSFKLSE (72 aa). Basic residues predominate over residues 133 to 142; it reads AKAKKSTPKK. 2 repeat units span residues 136 to 140 and 188 to 192. Residues 136–250 form a 7 X 5 AA repeats of K-K-[AS]-T-P region; it reads KKSTPKKAKA…KKAPAKKSTP (115 aa). Residues 139 to 142 mediate DNA binding; it reads TPKK. Residues 143–198 are compositionally biased toward basic and acidic residues; that stretch reads AKADGEAKPKKSEAKPKKAEAVKKTKAPKEKVERPKKEKKEKVEKKKATPKAEKPK. The 3; approximate repeat unit spans residues 199-203; the sequence is KAATP. A run of 4 repeats spans residues 209–213, 230–234, 236–240, and 246–250. Residues 227–250 are compositionally biased toward basic residues; it reads AKPKKATPSKKAAPKKAPAKKSTP. Over residues 251–261 the composition is skewed to basic and acidic residues; that stretch reads KAKEAKSKGKK.

Belongs to the histone H1/H5 family.

Its subcellular location is the nucleus. It is found in the chromosome. Histones H1 are necessary for the condensation of nucleosome chains into higher-order structures. The polypeptide is Histone H1-I (H1-I) (Volvox carteri (Green alga)).